The chain runs to 772 residues: Ion-translocating oxidoreductase complex subunit C (772 aa).

4Fe-4S ferredoxin-type domains lie at Gly-369–Tyr-397 and Lys-407–Phe-436. Residues Cys-377, Cys-380, Cys-383, Cys-387, Cys-416, Cys-419, Cys-422, and Cys-426 each contribute to the [4Fe-4S] cluster site. Residues Lys-599–Lys-748 form a disordered region.

It belongs to the 4Fe4S bacterial-type ferredoxin family. RnfC subfamily. In terms of assembly, the complex is composed of six subunits: RsxA, RsxB, RsxC, RsxD, RsxE and RsxG. It depends on [4Fe-4S] cluster as a cofactor.

It localises to the cell inner membrane. In terms of biological role, part of a membrane-bound complex that couples electron transfer with translocation of ions across the membrane. Required to maintain the reduced state of SoxR. This Shigella dysenteriae serotype 1 (strain Sd197) protein is Ion-translocating oxidoreductase complex subunit C.